Reading from the N-terminus, the 135-residue chain is Histone H1, macronuclear (135 aa).

Over residues Met1–Lys17 the composition is skewed to low complexity. The disordered stretch occupies residues Met1 to Asn135. 2 stretches are compositionally biased toward basic residues: residues Ser18–Pro54 and Lys62–Thr79. Positions Lys80–Lys112 are enriched in low complexity. A compositionally biased stretch (basic residues) spans Ala113 to Asn135.

The protein localises to the nucleus. The protein resides in the chromosome. Histones H1 are necessary for the condensation of nucleosome chains into higher-order structures. The sequence is that of Histone H1, macronuclear from Euplotes eurystomus (Ciliate).